Consider the following 344-residue polypeptide: tRNA N6-adenosine threonylcarbamoyltransferase (344 aa).

Residues His111 and His115 each coordinate Fe cation. Substrate contacts are provided by residues 134–138 (LVSGG), Asp167, Gly180, and Asn273. Asp301 is a Fe cation binding site.

This sequence belongs to the KAE1 / TsaD family. It depends on Fe(2+) as a cofactor.

The protein resides in the cytoplasm. It carries out the reaction L-threonylcarbamoyladenylate + adenosine(37) in tRNA = N(6)-L-threonylcarbamoyladenosine(37) in tRNA + AMP + H(+). Its function is as follows. Required for the formation of a threonylcarbamoyl group on adenosine at position 37 (t(6)A37) in tRNAs that read codons beginning with adenine. Is involved in the transfer of the threonylcarbamoyl moiety of threonylcarbamoyl-AMP (TC-AMP) to the N6 group of A37, together with TsaE and TsaB. TsaD likely plays a direct catalytic role in this reaction. This chain is tRNA N6-adenosine threonylcarbamoyltransferase, found in Cupriavidus necator (strain ATCC 17699 / DSM 428 / KCTC 22496 / NCIMB 10442 / H16 / Stanier 337) (Ralstonia eutropha).